Consider the following 257-residue polypeptide: Adenylate kinase (257 aa).

52 to 57 (GAGKGT) contacts ATP. The tract at residues 72–101 (ATGDMLRSQVAKKTELGKEAKKIMDQGGLV) is NMP. Residues Thr-73, Arg-78, 99-101 (GLV), 128-131 (GFPR), and Gln-135 contribute to the AMP site. The segment at 169-206 (GRLVHPASGRSYHKIFNPPKNDMKDDVTGEPLIQRSDD) is LID. Residues Arg-170 and 179 to 180 (SY) contribute to the ATP site. AMP contacts are provided by Arg-203 and Arg-214. Gln-242 provides a ligand contact to ATP.

Belongs to the adenylate kinase family. AK2 subfamily. Monomer.

The protein resides in the cytoplasm. Its subcellular location is the cytosol. It localises to the mitochondrion intermembrane space. It catalyses the reaction AMP + ATP = 2 ADP. Its function is as follows. Catalyzes the reversible transfer of the terminal phosphate group between ATP and AMP. Plays an important role in cellular energy homeostasis and in adenine nucleotide metabolism. Adenylate kinase activity is critical for regulation of the phosphate utilization and the AMP de novo biosynthesis pathways. The sequence is that of Adenylate kinase (adk1) from Neosartorya fischeri (strain ATCC 1020 / DSM 3700 / CBS 544.65 / FGSC A1164 / JCM 1740 / NRRL 181 / WB 181) (Aspergillus fischerianus).